A 177-amino-acid polypeptide reads, in one-letter code: Adenine phosphoribosyltransferase (177 aa).

This sequence belongs to the purine/pyrimidine phosphoribosyltransferase family. In terms of assembly, homodimer.

The protein resides in the cytoplasm. It catalyses the reaction AMP + diphosphate = 5-phospho-alpha-D-ribose 1-diphosphate + adenine. It participates in purine metabolism; AMP biosynthesis via salvage pathway; AMP from adenine: step 1/1. Catalyzes a salvage reaction resulting in the formation of AMP, that is energically less costly than de novo synthesis. The protein is Adenine phosphoribosyltransferase of Mycobacteroides abscessus (strain ATCC 19977 / DSM 44196 / CCUG 20993 / CIP 104536 / JCM 13569 / NCTC 13031 / TMC 1543 / L948) (Mycobacterium abscessus).